The sequence spans 283 residues: Pantothenate synthetase (283 aa).

30–37 (MGYLHEGH) contacts ATP. His37 serves as the catalytic Proton donor. A (R)-pantoate-binding site is contributed by Gln61. Residue Gln61 participates in beta-alanine binding. 147 to 150 (GQKD) lines the ATP pocket. Gln153 is a binding site for (R)-pantoate. ATP is bound by residues Val176 and 184–187 (LSSR).

It belongs to the pantothenate synthetase family. Homodimer.

It is found in the cytoplasm. The enzyme catalyses (R)-pantoate + beta-alanine + ATP = (R)-pantothenate + AMP + diphosphate + H(+). It functions in the pathway cofactor biosynthesis; (R)-pantothenate biosynthesis; (R)-pantothenate from (R)-pantoate and beta-alanine: step 1/1. In terms of biological role, catalyzes the condensation of pantoate with beta-alanine in an ATP-dependent reaction via a pantoyl-adenylate intermediate. This chain is Pantothenate synthetase, found in Moorella thermoacetica (strain ATCC 39073 / JCM 9320).